Reading from the N-terminus, the 576-residue chain is Sulfite reductase [NADPH] hemoprotein beta-component (576 aa).

[4Fe-4S] cluster is bound by residues C439, C445, C485, and C489. Position 489 (C489) interacts with siroheme.

Belongs to the nitrite and sulfite reductase 4Fe-4S domain family. Alpha(8)-beta(8). The alpha component is a flavoprotein, the beta component is a hemoprotein. Requires siroheme as cofactor. It depends on [4Fe-4S] cluster as a cofactor.

It carries out the reaction hydrogen sulfide + 3 NADP(+) + 3 H2O = sulfite + 3 NADPH + 4 H(+). It participates in sulfur metabolism; hydrogen sulfide biosynthesis; hydrogen sulfide from sulfite (NADPH route): step 1/1. Component of the sulfite reductase complex that catalyzes the 6-electron reduction of sulfite to sulfide. This is one of several activities required for the biosynthesis of L-cysteine from sulfate. The chain is Sulfite reductase [NADPH] hemoprotein beta-component from Aliivibrio fischeri (strain ATCC 700601 / ES114) (Vibrio fischeri).